The primary structure comprises 279 residues: Movement protein (279 aa).

The disordered stretch occupies residues glutamate 247–leucine 279. Residues glutamate 254–serine 268 show a composition bias toward low complexity.

Belongs to the cucumovirus movement protein family.

It is found in the host cell junction. The protein localises to the host plasmodesma. Functionally, transports viral genome to neighboring plant cells directly through plasmosdesmata, without any budding. The movement protein allows efficient cell to cell propagation, by bypassing the host cell wall barrier. Acts by forming a tubular structure at the host plasmodesmata, enlarging it enough to allow free passage of virion capsids. The polypeptide is Movement protein (Cucumis sativus (Cucumber)).